The primary structure comprises 239 residues: Ribonuclease PH (239 aa).

Phosphate contacts are provided by residues arginine 86 and 124-126 (GTR).

This sequence belongs to the RNase PH family. Homohexameric ring arranged as a trimer of dimers.

It catalyses the reaction tRNA(n+1) + phosphate = tRNA(n) + a ribonucleoside 5'-diphosphate. Phosphorolytic 3'-5' exoribonuclease that plays an important role in tRNA 3'-end maturation. Removes nucleotide residues following the 3'-CCA terminus of tRNAs; can also add nucleotides to the ends of RNA molecules by using nucleoside diphosphates as substrates, but this may not be physiologically important. Probably plays a role in initiation of 16S rRNA degradation (leading to ribosome degradation) during starvation. This Sodalis glossinidius (strain morsitans) protein is Ribonuclease PH.